Consider the following 403-residue polypeptide: Probable tRNA sulfurtransferase (403 aa).

The 106-residue stretch at 60-165 folds into the THUMP domain; sequence QLVEERLKPI…KEGVFLSCRT (106 aa). ATP-binding positions include 183–184, 208–209, Arg265, Gly287, and Gln296; these read ML and HF.

It belongs to the ThiI family.

The protein localises to the cytoplasm. The enzyme catalyses [ThiI sulfur-carrier protein]-S-sulfanyl-L-cysteine + a uridine in tRNA + 2 reduced [2Fe-2S]-[ferredoxin] + ATP + H(+) = [ThiI sulfur-carrier protein]-L-cysteine + a 4-thiouridine in tRNA + 2 oxidized [2Fe-2S]-[ferredoxin] + AMP + diphosphate. The catalysed reaction is [ThiS sulfur-carrier protein]-C-terminal Gly-Gly-AMP + S-sulfanyl-L-cysteinyl-[cysteine desulfurase] + AH2 = [ThiS sulfur-carrier protein]-C-terminal-Gly-aminoethanethioate + L-cysteinyl-[cysteine desulfurase] + A + AMP + 2 H(+). The protein operates within cofactor biosynthesis; thiamine diphosphate biosynthesis. In terms of biological role, catalyzes the ATP-dependent transfer of a sulfur to tRNA to produce 4-thiouridine in position 8 of tRNAs, which functions as a near-UV photosensor. Also catalyzes the transfer of sulfur to the sulfur carrier protein ThiS, forming ThiS-thiocarboxylate. This is a step in the synthesis of thiazole, in the thiamine biosynthesis pathway. The sulfur is donated as persulfide by IscS. This is Probable tRNA sulfurtransferase from Listeria monocytogenes serotype 4b (strain CLIP80459).